Reading from the N-terminus, the 498-residue chain is Phosphatidylserine synthase (498 aa).

A disordered region spans residues 1–65; it reads MKKRTNSRGT…GSVSSAGARR (65 aa). Topologically, residues 1 to 92 are cytoplasmic; that stretch reads MKKRTNSRGT…VDDISLDFFY (92 aa). Residues 7-25 are compositionally biased toward polar residues; that stretch reads SRGTPTSSGDALLDTSFSS. The helical transmembrane segment at 93 to 113 threads the bilayer; the sequence is KPHTITLLAVSVLAVMYFAFV. The Lumenal segment spans residues 114–122; it reads RNEANVDEN. A helical transmembrane segment spans residues 123-143; sequence LWAGLLCIVFFFLIVSVIAFP. Over 144-153 the chain is Cytoplasmic; it reads NGPFTRPHPA. Residues 154–174 form a helical membrane-spanning segment; it reads VWRILFGCSVLYLLTLQFLMF. The Lumenal segment spans residues 175–239; that stretch reads QNYPTIRSIF…AFKAILIRHM (65 aa). Asn205 carries N-linked (GlcNAc...) asparagine glycosylation. A helical membrane pass occupies residues 240–260; the sequence is GILWAISVMWEITEITFAHLL. The Cytoplasmic segment spans residues 261 to 266; the sequence is PNFIEC. Residues 267–287 form a helical membrane-spanning segment; it reads WWDALILDVIICNGLGIWMGL. Residues 288 to 339 lie on the Lumenal side of the membrane; that stretch reads KICQILEMREYKWASIKDISTTTGKIKRAMLQFTPESWSAIRWLDPKSTAMR. A helical transmembrane segment spans residues 340-360; the sequence is FAAVIQLVIFWQVTELNTFFL. Residues 361 to 367 lie on the Cytoplasmic side of the membrane; it reads KHIFEMP. The helical transmembrane segment at 368–388 threads the bilayer; sequence PDHFIVIGRLIFIGLFVAPSV. Over 389–402 the chain is Lumenal; sequence RQYYVYVTDTRCKR. Residues 403–423 traverse the membrane as a helical segment; sequence VGTQCWVYGAIMVSEAILCIK. Topologically, residues 424-436 are cytoplasmic; the sequence is NGKELFERTQAIN. A helical transmembrane segment spans residues 437 to 457; that stretch reads IVLWLTVQVIISVAFVYLAVY. Residues 458-498 are Lumenal-facing; that stretch reads WQQRQLKKVSSTPAKTKETIPASSSSPSKGKLSPQKEKKLK. A disordered region spans residues 465 to 498; that stretch reads KVSSTPAKTKETIPASSSSPSKGKLSPQKEKKLK. The segment covering 478 to 490 has biased composition (low complexity); the sequence is PASSSSPSKGKLS.

The protein belongs to the phosphatidyl serine synthase family.

Its subcellular location is the endoplasmic reticulum membrane. The enzyme catalyses a 1,2-diacyl-sn-glycero-3-phosphoethanolamine + L-serine = a 1,2-diacyl-sn-glycero-3-phospho-L-serine + ethanolamine. It functions in the pathway phospholipid metabolism; phosphatidylserine biosynthesis. Its function is as follows. Catalyzes a base-exchange reaction in which the polar head group of phosphatidylethanolamine (PE) is replaced by L-serine. The polypeptide is Phosphatidylserine synthase (Drosophila melanogaster (Fruit fly)).